The primary structure comprises 169 residues: MRKGKLPRKLGRTASHRRATLANLSSQLIIYKRVTTTEAKAKEMKRIVDKLITRAKKGTVHAQREVFKFVRDKEAVKTLFEDVVSKSAERNGGYTRVIKLPPRYGDAAKMALIELVDYSEMTTEKAVKRQDRSRRVKGSKKAIDEKTSDDSASVEAAPAAPEAEEKKDA.

Residues 124-169 are disordered; the sequence is EKAVKRQDRSRRVKGSKKAIDEKTSDDSASVEAAPAAPEAEEKKDA. Residues 131 to 140 show a composition bias toward basic residues; that stretch reads DRSRRVKGSK. Residues 150 to 161 show a composition bias toward low complexity; sequence DSASVEAAPAAP.

Belongs to the bacterial ribosomal protein bL17 family. In terms of assembly, part of the 50S ribosomal subunit. Contacts protein L32.

This chain is Large ribosomal subunit protein bL17, found in Chloroherpeton thalassium (strain ATCC 35110 / GB-78).